The sequence spans 199 residues: dITP/XTP pyrophosphatase (199 aa).

A substrate-binding site is contributed by 8–13 (SGNAGK). The Proton acceptor role is filled by Asp-69. Asp-69 provides a ligand contact to Mg(2+). Substrate is bound by residues Ser-70, 154–157 (FGYN), Lys-177, and 182–183 (HR).

The protein belongs to the HAM1 NTPase family. In terms of assembly, homodimer. Mg(2+) is required as a cofactor.

It carries out the reaction XTP + H2O = XMP + diphosphate + H(+). It catalyses the reaction dITP + H2O = dIMP + diphosphate + H(+). The catalysed reaction is ITP + H2O = IMP + diphosphate + H(+). In terms of biological role, pyrophosphatase that catalyzes the hydrolysis of nucleoside triphosphates to their monophosphate derivatives, with a high preference for the non-canonical purine nucleotides XTP (xanthosine triphosphate), dITP (deoxyinosine triphosphate) and ITP. Seems to function as a house-cleaning enzyme that removes non-canonical purine nucleotides from the nucleotide pool, thus preventing their incorporation into DNA/RNA and avoiding chromosomal lesions. The protein is dITP/XTP pyrophosphatase of Xanthomonas campestris pv. campestris (strain 8004).